Here is a 256-residue protein sequence, read N- to C-terminus: Thiazole synthase (256 aa).

Lys96 (schiff-base intermediate with DXP) is an active-site residue. Residues Gly157, 183–184 (AG), and 205–206 (NT) each bind 1-deoxy-D-xylulose 5-phosphate.

Belongs to the ThiG family. Homotetramer. Forms heterodimers with either ThiH or ThiS.

It is found in the cytoplasm. The catalysed reaction is [ThiS sulfur-carrier protein]-C-terminal-Gly-aminoethanethioate + 2-iminoacetate + 1-deoxy-D-xylulose 5-phosphate = [ThiS sulfur-carrier protein]-C-terminal Gly-Gly + 2-[(2R,5Z)-2-carboxy-4-methylthiazol-5(2H)-ylidene]ethyl phosphate + 2 H2O + H(+). It participates in cofactor biosynthesis; thiamine diphosphate biosynthesis. Functionally, catalyzes the rearrangement of 1-deoxy-D-xylulose 5-phosphate (DXP) to produce the thiazole phosphate moiety of thiamine. Sulfur is provided by the thiocarboxylate moiety of the carrier protein ThiS. In vitro, sulfur can be provided by H(2)S. The chain is Thiazole synthase from Bacillus cytotoxicus (strain DSM 22905 / CIP 110041 / 391-98 / NVH 391-98).